An 83-amino-acid chain; its full sequence is Apolipoprotein C-I, acidic form (83 aa).

The first 26 residues, 1–26, serve as a signal peptide directing secretion; it reads MRLFLSLPVLVVVLSMVLEGPAPAQG.

This sequence belongs to the apolipoprotein C1 family.

It localises to the secreted. The protein is Apolipoprotein C-I, acidic form (APOC1A) of Gorilla gorilla gorilla (Western lowland gorilla).